Reading from the N-terminus, the 268-residue chain is Shikimate dehydrogenase (NADP(+)) (268 aa).

Residues Ser13–Ser15 and Thr60 each bind shikimate. Lys64 functions as the Proton acceptor in the catalytic mechanism. NADP(+) is bound at residue Glu76. Positions 85 and 100 each coordinate shikimate. NADP(+) contacts are provided by residues Gly124–Ala128, Asn148–Arg153, and Ile209. Residue Tyr211 coordinates shikimate. Gly232 is an NADP(+) binding site.

The protein belongs to the shikimate dehydrogenase family. In terms of assembly, homodimer.

The enzyme catalyses shikimate + NADP(+) = 3-dehydroshikimate + NADPH + H(+). The protein operates within metabolic intermediate biosynthesis; chorismate biosynthesis; chorismate from D-erythrose 4-phosphate and phosphoenolpyruvate: step 4/7. In terms of biological role, involved in the biosynthesis of the chorismate, which leads to the biosynthesis of aromatic amino acids. Catalyzes the reversible NADPH linked reduction of 3-dehydroshikimate (DHSA) to yield shikimate (SA). This Staphylococcus aureus (strain MRSA252) protein is Shikimate dehydrogenase (NADP(+)).